The chain runs to 144 residues: Grifin (144 aa).

One can recognise a Galectin domain in the interval 5 to 133; it reads FEAFCAGGLA…DHQLAQVELA (129 aa). Serine 138 carries the phosphoserine modification.

As to quaternary structure, homodimer. As to expression, lens-specific. Located at the interface between lens fiber cells (at protein level).

The polypeptide is Grifin (Grifin) (Rattus norvegicus (Rat)).